Reading from the N-terminus, the 201-residue chain is Holliday junction resolvase RecU (201 aa).

Mg(2+)-binding residues include T85, D87, E100, and Q119.

This sequence belongs to the RecU family. It depends on Mg(2+) as a cofactor.

It localises to the cytoplasm. It catalyses the reaction Endonucleolytic cleavage at a junction such as a reciprocal single-stranded crossover between two homologous DNA duplexes (Holliday junction).. Functionally, endonuclease that resolves Holliday junction intermediates in genetic recombination. Cleaves mobile four-strand junctions by introducing symmetrical nicks in paired strands. Promotes annealing of linear ssDNA with homologous dsDNA. Required for DNA repair, homologous recombination and chromosome segregation. The chain is Holliday junction resolvase RecU from Geobacillus thermodenitrificans (strain NG80-2).